Consider the following 230-residue polypeptide: Cytidylate kinase (230 aa).

Glycine 12–threonine 20 is a binding site for ATP.

This sequence belongs to the cytidylate kinase family. Type 1 subfamily.

The protein resides in the cytoplasm. It carries out the reaction CMP + ATP = CDP + ADP. The enzyme catalyses dCMP + ATP = dCDP + ADP. This chain is Cytidylate kinase, found in Aeromonas hydrophila subsp. hydrophila (strain ATCC 7966 / DSM 30187 / BCRC 13018 / CCUG 14551 / JCM 1027 / KCTC 2358 / NCIMB 9240 / NCTC 8049).